Reading from the N-terminus, the 314-residue chain is MAQINCTQVTEFILVGLTDREELKMPLFVVFLSIYLFTTLGNLGLILVIRTDARLHTPMYFFLSNLAFVDFCYSSVITPKMLGNFLYKQNMISFNACAAQLGCFLAFMTAECLLLASMAYDRYVAICNPLLYMVLMSPGICFQLVAAPYSYSFLVALFHAILTFRLCYCHSNAINHFYCDDMPLLRLTCSDTHSKQLWIFVCAGIMFISSLLIVFISYTFIISAILRMRSAEGRRKAFSTCGSHMLAVTIFYGTLIFMYLQPSSNHSLDTDKMASVFYTVIIPMLNPLIYSLRNKEVKDALKKLIASKNQMLSS.

The Extracellular segment spans residues 1-25 (MAQINCTQVTEFILVGLTDREELKM). Residue Asn5 is glycosylated (N-linked (GlcNAc...) asparagine). Residues 26-46 (PLFVVFLSIYLFTTLGNLGLI) traverse the membrane as a helical segment. At 47–54 (LVIRTDAR) the chain is on the cytoplasmic side. A helical membrane pass occupies residues 55-75 (LHTPMYFFLSNLAFVDFCYSS). At 76–99 (VITPKMLGNFLYKQNMISFNACAA) the chain is on the extracellular side. Cys97 and Cys189 form a disulfide bridge. The chain crosses the membrane as a helical span at residues 100–120 (QLGCFLAFMTAECLLLASMAY). The Cytoplasmic portion of the chain corresponds to 121–133 (DRYVAICNPLLYM). The helical transmembrane segment at 134–154 (VLMSPGICFQLVAAPYSYSFL) threads the bilayer. Topologically, residues 155–196 (VALFHAILTFRLCYCHSNAINHFYCDDMPLLRLTCSDTHSKQ) are extracellular. Residues 197–217 (LWIFVCAGIMFISSLLIVFIS) traverse the membrane as a helical segment. Over 218 to 237 (YTFIISAILRMRSAEGRRKA) the chain is Cytoplasmic. Residues 238–258 (FSTCGSHMLAVTIFYGTLIFM) traverse the membrane as a helical segment. The Extracellular segment spans residues 259–271 (YLQPSSNHSLDTD). N-linked (GlcNAc...) asparagine glycosylation is present at Asn265. Residues 272–292 (KMASVFYTVIIPMLNPLIYSL) traverse the membrane as a helical segment. Topologically, residues 293–314 (RNKEVKDALKKLIASKNQMLSS) are cytoplasmic.

The protein belongs to the G-protein coupled receptor 1 family.

It is found in the cell membrane. Functionally, potential odorant receptor. This chain is Olfactory receptor 8U9, found in Mus musculus (Mouse).